The sequence spans 843 residues: Aconitase AMT8-2 (843 aa).

258 to 260 (DSH) is a binding site for substrate. Cys-450, Cys-513, and Cys-516 together coordinate [4Fe-4S] cluster. Residues Arg-536, Arg-541, and 712-713 (SR) contribute to the substrate site.

The protein belongs to the aconitase/IPM isomerase family.

It participates in mycotoxin biosynthesis. Aconitase; part of the gene clusters that mediate the biosynthesis of AM-toxins, host-selective toxins (HSTs) causing Alternaria blotch on apple, a worldwide distributed disease. AM-toxins are cyclic depsipeptides containing the 3 residues 2-hydroxy-isovaleric acid (2-HIV), dehydroalanine, L-alanine which are common for all 3 AM-toxins I to III. The fourth precursor is L-alpha-amino-methoxyphenyl-valeric acid (L-Amv) for AM-toxin I, L-alpha-amino-phenyl-valeric acid (L-Apv) for AM-toxin II, and L-alpha-amino-hydroxyphenyl-valeric acid (L-Ahv) for AM-toxin III. AM-toxins have two target sites for affecting susceptible apple cells; they cause invagination of the plasma membrane and electrolyte loss and chloroplast disorganization. The non-ribosomal peptide synthetase AMT1 contains 4 catalytic modules and is responsible for activation of each residue in AM-toxin. The aldo-keto reductase AMT2 catalyzes the conversion of 2-keto-isovaleric acid (2-KIV) to 2-hydroxy-isovaleric acid (2-HIV), one of the precursor residues incorporated by AMT1 during AM-toxin biosynthesis, by reduction of its ketone to an alcohol. The cytochrome P450 monooxygenase AMT3 and the thioesterase AMT4 are also important for AM-toxin production, but their exact function within the AM-toxin biosynthesis are not known yet. Up to 21 proteins (including AMT1 to AMT4) are predicted to be involved in AM-toxin biosynthesis since their expression ishighly up-regulated in AM-toxin-producing cultures. The protein is Aconitase AMT8-2 of Alternaria alternata (Alternaria rot fungus).